The chain runs to 578 residues: Polypeptide N-acetylgalactosaminyltransferase 4 (578 aa).

Residues 1-12 are Cytoplasmic-facing; it reads MAVRWTWAGKSC. A helical; Signal-anchor for type II membrane protein membrane pass occupies residues 13 to 35; the sequence is LLLALLTLAYILVEFSVSTLYAS. Over 36-578 the chain is Lumenal; the sequence is PGAGGARELG…DKNQLWRFEK (543 aa). 5 disulfide bridges follow: Cys124–Cys357, Cys348–Cys421, Cys457–Cys477, Cys503–Cys518, and Cys547–Cys565. Residues 134–243 form a catalytic subdomain A region; that stretch reads LPTTSVIIAF…TGWLEPLLER (110 aa). The substrate site is built by Asp175 and Arg204. The Mn(2+) site is built by Asp227 and His229. The catalytic subdomain B stretch occupies residues 303–365; that stretch reads PIRSPTMAGG…PCSHVGHVFP (63 aa). Trp334 serves as a coordination point for substrate. His362 contributes to the Mn(2+) binding site. Tyr370 provides a ligand contact to substrate. The Ricin B-type lectin domain occupies 444-577; that stretch reads WHGAIRSMGI…LDKNQLWRFE (134 aa). Asn471 carries N-linked (GlcNAc...) asparagine glycosylation.

It belongs to the glycosyltransferase 2 family. GalNAc-T subfamily. The cofactor is Mn(2+). In terms of tissue distribution, highly expressed in sublingual gland, stomach, colon, small intestine and cervix. Expressed at intermediate levels in kidney, ovary, lung and uterus. Weakly expressed in spleen, liver, heart and brain. Not expressed in submandibular and parotid glands, skeletal muscle and testis.

The protein localises to the golgi apparatus membrane. It carries out the reaction L-seryl-[protein] + UDP-N-acetyl-alpha-D-galactosamine = a 3-O-[N-acetyl-alpha-D-galactosaminyl]-L-seryl-[protein] + UDP + H(+). The catalysed reaction is L-threonyl-[protein] + UDP-N-acetyl-alpha-D-galactosamine = a 3-O-[N-acetyl-alpha-D-galactosaminyl]-L-threonyl-[protein] + UDP + H(+). It functions in the pathway protein modification; protein glycosylation. Its function is as follows. Catalyzes the initial reaction in O-linked oligosaccharide biosynthesis, the transfer of an N-acetyl-D-galactosamine residue to a serine or threonine residue on the protein receptor. Has a highest activity toward EA2 peptide substrate and a much lower activity with EPO-T, Muc2, Muc1a, Muc1b. The sequence is that of Polypeptide N-acetylgalactosaminyltransferase 4 (Galnt4) from Mus musculus (Mouse).